Here is a 339-residue protein sequence, read N- to C-terminus: Vomeronasal type-1 receptor A14 (339 aa).

At 1 to 42 (MMGVQICQGMMSEIPFFSPPPQFSYMMNKNIRLHTDSNIRNT) the chain is on the extracellular side. Residues 43 to 63 (FFTDIGIGISANSLLLLFNIF) traverse the membrane as a helical segment. Residues 64–75 (KLTRGQRSRLTD) lie on the Cytoplasmic side of the membrane. A helical membrane pass occupies residues 76 to 96 (LPIGLLSLINLLMLLMAAFIA). Residues 97-119 (TDTFISWKGWDDIICKFLVYLYR) are Extracellular-facing. A disulfide bridge links Cys-111 with Cys-198. The helical transmembrane segment at 120-140 (TFRGLSLCTSCLLSVLQAIIL) threads the bilayer. At 141–160 (SPRSSCLAKFKHKPPHHISC) the chain is on the cytoplasmic side. The chain crosses the membrane as a helical span at residues 161-181 (AILSLSVLYMFIGSHLLVSII). At 182 to 213 (ATPNLTTNDFIHVTQSCSILPMSYLMQCMFST) the chain is on the extracellular side. Asn-185 carries an N-linked (GlcNAc...) asparagine glycan. Residues 214–234 (LLAIRDVFLISLMVLSTWYMV) form a helical membrane-spanning segment. Over 235–264 (ALLCRHRKQTRHLQGTSLSPKASPEQRATR) the chain is Cytoplasmic. A helical transmembrane segment spans residues 265–285 (SILMLMSLFVLMSVFDSIVCS). The Extracellular portion of the chain corresponds to 286 to 296 (SRTMYLNDPIS). Residues 297-317 (YSIQLFMVHIYATVSPFVFIV) form a helical membrane-spanning segment. The Cytoplasmic portion of the chain corresponds to 318-339 (TEKHIVNFLRSVCEGDECLNIH).

Belongs to the G-protein coupled receptor 1 family.

Its subcellular location is the cell membrane. Putative pheromone receptor implicated in the regulation of social as well as reproductive behavior. The protein is Vomeronasal type-1 receptor A14 of Rattus norvegicus (Rat).